Consider the following 88-residue polypeptide: Small ribosomal subunit protein bS16 (88 aa).

This sequence belongs to the bacterial ribosomal protein bS16 family.

This is Small ribosomal subunit protein bS16 from Desulfitobacterium hafniense (strain DSM 10664 / DCB-2).